The primary structure comprises 341 residues: N-acetyl-gamma-glutamyl-phosphate reductase (341 aa).

Residue Cys-149 is part of the active site.

The protein belongs to the NAGSA dehydrogenase family. Type 1 subfamily.

The protein localises to the cytoplasm. It catalyses the reaction N-acetyl-L-glutamate 5-semialdehyde + phosphate + NADP(+) = N-acetyl-L-glutamyl 5-phosphate + NADPH + H(+). Its pathway is amino-acid biosynthesis; L-arginine biosynthesis; N(2)-acetyl-L-ornithine from L-glutamate: step 3/4. In terms of biological role, catalyzes the NADPH-dependent reduction of N-acetyl-5-glutamyl phosphate to yield N-acetyl-L-glutamate 5-semialdehyde. This is N-acetyl-gamma-glutamyl-phosphate reductase from Methanocaldococcus jannaschii (strain ATCC 43067 / DSM 2661 / JAL-1 / JCM 10045 / NBRC 100440) (Methanococcus jannaschii).